We begin with the raw amino-acid sequence, 261 residues long: Ribosome-inactivating protein PD-L1/PD-L2 (261 aa).

Residues N10 and N43 are each glycosylated (N-linked (GlcNAc...) asparagine; in PD-L1 and PD-L2). Intrachain disulfides connect C34–C258 and C84–C105. The active site involves Y72. V73 is a binding site for substrate. S120 lines the substrate pocket. Catalysis depends on residues Y122, E175, and R178. Residue R178 participates in substrate binding. N255 carries an N-linked (GlcNAc...) asparagine; in PD-L1 glycan.

It belongs to the ribosome-inactivating protein family. Type 1 RIP subfamily. Post-translationally, N-glycosylated. Loss of glycosylation does not affect DNA-cleaving ability. Loss of glycosylation does not affect protein synthesis inhibition, but increases adenine polynucleotide glycosidase activity likely as a consequence of the increased accessibility of substrates to the active site pocket in the absence of glycosylation. As to expression, expressed in leaves (at protein level).

It catalyses the reaction Endohydrolysis of the N-glycosidic bond at one specific adenosine on the 28S rRNA.. Its function is as follows. Inhibits protein synthesis. Has adenine polynucleotide glycosidase activity on herring sperm (hs)DNA and poly(A) substrates. Cleaves supercoiled pBR322 dsDNA. The polypeptide is Ribosome-inactivating protein PD-L1/PD-L2 (Phytolacca dioica (Bella sombra tree)).